Here is a 299-residue protein sequence, read N- to C-terminus: NAD kinase (299 aa).

The active-site Proton acceptor is Asp-64. NAD(+) contacts are provided by residues 64–65 (DG), 138–139 (ND), Arg-149, Arg-166, Asp-168, 179–184 (TGYAVS), and Gln-238.

The protein belongs to the NAD kinase family. A divalent metal cation serves as cofactor.

It is found in the cytoplasm. It catalyses the reaction NAD(+) + ATP = ADP + NADP(+) + H(+). In terms of biological role, involved in the regulation of the intracellular balance of NAD and NADP, and is a key enzyme in the biosynthesis of NADP. Catalyzes specifically the phosphorylation on 2'-hydroxyl of the adenosine moiety of NAD to yield NADP. This chain is NAD kinase, found in Nitratidesulfovibrio vulgaris (strain ATCC 29579 / DSM 644 / CCUG 34227 / NCIMB 8303 / VKM B-1760 / Hildenborough) (Desulfovibrio vulgaris).